A 147-amino-acid chain; its full sequence is Deoxyuridine 5'-triphosphate nucleotidohydrolase (147 aa).

8 residues coordinate dUMP: Ser69, Gly82, Asp85, Tyr88, Lys93, Arg137, Phe142, and Gly143.

Belongs to the dUTPase family. In terms of assembly, homotrimer. Mg(2+) is required as a cofactor.

The enzyme catalyses dUTP + H2O = dUMP + diphosphate + H(+). The protein operates within pyrimidine metabolism; dUMP biosynthesis; dUMP from dCTP (dUTP route): step 2/2. Involved in nucleotide metabolism via production of dUMP, the immediate precursor of thymidine nucleotides, and decreases the intracellular concentration of dUTP so that uracil cannot be incorporated into DNA. Shows a significant activity against dITP, another potentially mutagenic nucleotide. In Saccharomyces cerevisiae (strain ATCC 204508 / S288c) (Baker's yeast), this protein is Deoxyuridine 5'-triphosphate nucleotidohydrolase.